Consider the following 1376-residue polypeptide: YLP motif-containing protein 1 (1376 aa).

Disordered regions lie at residues 1-335 and 511-1058; these read MYPN…PEED and STIP…PPGR. Residues 14 to 27 show a composition bias toward pro residues; it reads YPPPPVPPPPPPVA. 2 stretches are compositionally biased toward low complexity: residues 31–50 and 59–80; these read ASPG…SSSG and LAQL…LQPH. 5 stretches are compositionally biased toward pro residues: residues 81-93, 102-114, 148-158, 166-176, and 184-204; these read HLPP…PPVM, QPPP…PPGP, PESPPVPPGSY, MPPPQPPPSYY, and YLPP…PPSI. 2 stretches are compositionally biased toward polar residues: residues 207–216 and 238–260; these read GNKTTIQQEP and STMT…LQQR. The segment covering 261–271 has biased composition (basic residues); it reads TKVHLPGHKKG. Positions 277–286 are enriched in basic and acidic residues; it reads DVPEPIKEEA. 4 stretches are compositionally biased toward pro residues: residues 303-320, 511-537, 545-594, and 632-641; these read PPLP…PPEE, STIP…PGMP, LPPP…PQGM, and PPSPYHPPPQ. Residues 642–671 are compositionally biased toward polar residues; the sequence is SEQGNSKPLNKVFSSEQGLGESSSALSQSV. Residue lysine 675 is modified to N6-methyllysine. The segment covering 698 to 714 has biased composition (basic and acidic residues); it reads RGPREQKEQLQKLKDFG. Pro residues-rich tracts occupy residues 738 to 753, 773 to 796, and 840 to 870; these read MYPP…PMGK, TRPP…PPVI, and PVLP…PPPV. Residue lysine 886 forms a Glycyl lysine isopeptide (Lys-Gly) (interchain with G-Cter in SUMO2) linkage. Basic and acidic residues-rich tracts occupy residues 896 to 930, 937 to 1004, 1013 to 1023, and 1039 to 1058; these read ITLR…EPYF, TDHR…DRPP, GERRTYPEERM, and RVEK…PPGR. Lysine 943 is covalently cross-linked (Glycyl lysine isopeptide (Lys-Gly) (interchain with G-Cter in SUMO2)). Positions 1326-1333 are involved in interaction with PPP1CA; that stretch reads KKRVRWAD.

As to quaternary structure, interacts with PPP1CA and NCOA5. Forms a complex with ILF2, ILF3, KHDRBS1, RBMX, NCOA5 and PPP1CA. In terms of tissue distribution, high level expression seen in the brain, adipose tissue, heart and kidney, with a low level expression in muscle, spleen and lung (at protein level).

The protein resides in the nucleus. The protein localises to the nucleus speckle. Functionally, plays a role in the reduction of telomerase activity during differentiation of embryonic stem cells by binding to the core promoter of TERT and controlling its down-regulation. The polypeptide is YLP motif-containing protein 1 (Ylpm1) (Rattus norvegicus (Rat)).